The sequence spans 221 residues: Uracil-DNA glycosylase 1 (221 aa).

The Proton acceptor role is filled by Asp-61.

This sequence belongs to the uracil-DNA glycosylase (UDG) superfamily. UNG family.

Its subcellular location is the cytoplasm. It catalyses the reaction Hydrolyzes single-stranded DNA or mismatched double-stranded DNA and polynucleotides, releasing free uracil.. Functionally, excises uracil residues from the DNA which can arise as a result of misincorporation of dUMP residues by DNA polymerase or due to deamination of cytosine. This chain is Uracil-DNA glycosylase 1, found in Listeria innocua serovar 6a (strain ATCC BAA-680 / CLIP 11262).